A 217-amino-acid chain; its full sequence is Adenylate kinase (217 aa).

Residue 10 to 15 participates in ATP binding; that stretch reads GAGKGT. Residues 30–59 form an NMP region; that stretch reads STGDIFRANIKNNTELGAKAKEYMDQGLLV. AMP is bound by residues threonine 31, arginine 36, 57 to 59, 85 to 88, and glutamine 92; these read LLV and GFPR. Residues 126–163 form an LID region; sequence GRRACVSCGGTYHVVFTPTKKEGICDACGGELTIRDDD. Arginine 127 lines the ATP pocket. 2 residues coordinate Zn(2+): cysteine 130 and cysteine 133. 136-137 contacts ATP; the sequence is TY. Zn(2+)-binding residues include cysteine 150 and cysteine 153. Positions 160 and 171 each coordinate AMP. An ATP-binding site is contributed by lysine 199.

The protein belongs to the adenylate kinase family. Monomer.

The protein localises to the cytoplasm. The catalysed reaction is AMP + ATP = 2 ADP. It participates in purine metabolism; AMP biosynthesis via salvage pathway; AMP from ADP: step 1/1. Catalyzes the reversible transfer of the terminal phosphate group between ATP and AMP. Plays an important role in cellular energy homeostasis and in adenine nucleotide metabolism. This chain is Adenylate kinase, found in Lachnoclostridium phytofermentans (strain ATCC 700394 / DSM 18823 / ISDg) (Clostridium phytofermentans).